The following is a 437-amino-acid chain: O-antigen export system ATP-binding protein RfbB (437 aa).

An ABC transporter domain is found at 37–256 (LRGKRQSRDA…YREAISLAEA (220 aa)). 69–76 (GRNGSGKS) provides a ligand contact to ATP.

This sequence belongs to the ABC transporter superfamily.

The protein localises to the cell inner membrane. Its function is as follows. May form an ATP-driven O-antigen export apparatus, in association with RfbA. This is O-antigen export system ATP-binding protein RfbB (rfbB) from Myxococcus xanthus.